A 783-amino-acid chain; its full sequence is Probable alpha,alpha-trehalose-phosphate synthase [UDP-forming] 3 (783 aa).

The interval 11 to 456 is glycosyltransferase; sequence QTLLVVANRL…GFDFLSELND (446 aa).

In the N-terminal section; belongs to the glycosyltransferase 20 family. The protein in the C-terminal section; belongs to the trehalose phosphatase family.

It catalyses the reaction D-glucose 6-phosphate + UDP-alpha-D-glucose = alpha,alpha-trehalose 6-phosphate + UDP + H(+). This chain is Probable alpha,alpha-trehalose-phosphate synthase [UDP-forming] 3 (TPS3), found in Arabidopsis thaliana (Mouse-ear cress).